The chain runs to 173 residues: Acireductone dioxygenase 1 (173 aa).

His96, His98, Glu102, and His140 together coordinate Fe(2+). Ni(2+)-binding residues include His96, His98, Glu102, and His140.

This sequence belongs to the acireductone dioxygenase (ARD) family. As to quaternary structure, monomer. Fe(2+) serves as cofactor. It depends on Ni(2+) as a cofactor.

The enzyme catalyses 1,2-dihydroxy-5-(methylsulfanyl)pent-1-en-3-one + O2 = 3-(methylsulfanyl)propanoate + CO + formate + 2 H(+). It catalyses the reaction 1,2-dihydroxy-5-(methylsulfanyl)pent-1-en-3-one + O2 = 4-methylsulfanyl-2-oxobutanoate + formate + 2 H(+). The protein operates within amino-acid biosynthesis; L-methionine biosynthesis via salvage pathway; L-methionine from S-methyl-5-thio-alpha-D-ribose 1-phosphate: step 5/6. In terms of biological role, catalyzes 2 different reactions between oxygen and the acireductone 1,2-dihydroxy-3-keto-5-methylthiopentene (DHK-MTPene) depending upon the metal bound in the active site. Fe-containing acireductone dioxygenase (Fe-ARD) produces formate and 2-keto-4-methylthiobutyrate (KMTB), the alpha-ketoacid precursor of methionine in the methionine recycle pathway. Ni-containing acireductone dioxygenase (Ni-ARD) produces methylthiopropionate, carbon monoxide and formate, and does not lie on the methionine recycle pathway. This is Acireductone dioxygenase 1 from Pectobacterium atrosepticum (strain SCRI 1043 / ATCC BAA-672) (Erwinia carotovora subsp. atroseptica).